We begin with the raw amino-acid sequence, 349 residues long: Phenylalanine--tRNA ligase alpha subunit (349 aa).

Glu-261 contacts Mg(2+).

This sequence belongs to the class-II aminoacyl-tRNA synthetase family. Phe-tRNA synthetase alpha subunit type 1 subfamily. Tetramer of two alpha and two beta subunits. Mg(2+) serves as cofactor.

It is found in the cytoplasm. It carries out the reaction tRNA(Phe) + L-phenylalanine + ATP = L-phenylalanyl-tRNA(Phe) + AMP + diphosphate + H(+). This is Phenylalanine--tRNA ligase alpha subunit from Leuconostoc citreum (strain KM20).